The primary structure comprises 61 residues: Metallothionein-I, hippocampal (61 aa).

Met-1 is subject to N-acetylmethionine. The beta stretch occupies residues 1 to 29; sequence MDPNCSCATGDSCACASTCKCKECKCTSC. Residues Cys-5, Cys-7, Cys-13, Cys-15, Cys-19, Cys-21, Cys-24, Cys-26, Cys-29, Cys-33, Cys-34, Cys-36, Cys-37, Cys-41, Cys-44, Cys-48, Cys-50, and Cys-57 each contribute to the a divalent metal cation site. An alpha region spans residues 30 to 61; that stretch reads KKSCCSCCPVGCAKCAQGCICKGASDKCSCCA. Phosphoserine is present on Ser-58. A divalent metal cation is bound by residues Cys-59 and Cys-60.

Belongs to the metallothionein superfamily. Type 1 family.

Functionally, metallothioneins have a high content of cysteine residues that bind various heavy metals; these proteins are transcriptionally regulated by both heavy metals and glucocorticoids. This isoform may play a role in regulating the transport, accumulation, and compartmentation of zinc in the hippocampus. The chain is Metallothionein-I, hippocampal from Bos taurus (Bovine).